The sequence spans 108 residues: uncharacterized protein (108 aa).

Residues 1–15 show a composition bias toward polar residues; sequence MSDSNSRLVYSTQTG. The segment at 1–29 is disordered; that stretch reads MSDSNSRLVYSTQTGRIEEPKTAPVRPKG. The segment covering 16 to 29 has biased composition (basic and acidic residues); it reads RIEEPKTAPVRPKG.

The protein belongs to the SUI1 family.

This is an uncharacterized protein from Salmonella typhi.